The sequence spans 380 residues: Probable inactive dehydrogenase easA (380 aa).

FMN is bound by residues 25–27, Ala-60, Gln-102, and His-171; that span reads PMT. His-171 and Asn-174 together coordinate substrate. Residues Lys-223, Gly-299, 324-325, and Arg-325 contribute to the FMN site; that span reads GR. A substrate-binding site is contributed by Tyr-352.

This sequence belongs to the NADH:flavin oxidoreductase/NADH oxidase family.

Its function is as follows. Probable inactive dehydrogenase; part of the gene cluster that mediates the biosynthesis of fungal ergot alkaloid. DmaW catalyzes the first step of ergot alkaloid biosynthesis by condensing dimethylallyl diphosphate (DMAP) and tryptophan to form 4-dimethylallyl-L-tryptophan. The second step is catalyzed by the methyltransferase easF that methylates 4-dimethylallyl-L-tryptophan in the presence of S-adenosyl-L-methionine, resulting in the formation of 4-dimethylallyl-L-abrine. The catalase easC and the FAD-dependent oxidoreductase easE then transform 4-dimethylallyl-L-abrine to chanoclavine-I which is further oxidized by easD in the presence of NAD(+), resulting in the formation of chanoclavine-I aldehyde. Agroclavine dehydrogenase easG then mediates the conversion of chanoclavine-I aldehyde to agroclavine via a non-enzymatic adduct reaction: the substrate is an iminium intermediate that is formed spontaneously from chanoclavine-I aldehyde in the presence of glutathione. The presence of easA is not required to complete this reaction. Further conversion of agroclavine to paspalic acid is a two-step process involving oxidation of agroclavine to elymoclavine and of elymoclavine to paspalic acid, the second step being performed by the elymoclavine oxidase cloA. Paspalic acid is then further converted to D-lysergic acid. Ergopeptines are assembled from D-lysergic acid and three different amino acids by the D-lysergyl-peptide-synthetases composed each of a monomudular and a trimodular nonribosomal peptide synthetase subunit. LpsB and lpsC encode the monomodular subunits responsible for D-lysergic acid activation and incorporation into the ergopeptine backbone. LpsA1 and A2 subunits encode the trimodular nonribosomal peptide synthetase assembling the tripeptide portion of ergopeptines. LpsA1 is responsible for formation of the major ergopeptine, ergotamine, and lpsA2 for alpha-ergocryptine, the minor ergopeptine of the total alkaloid mixture elaborated by C.purpurea. D-lysergyl-tripeptides are assembled by the nonribosomal peptide synthetases and released as N-(D-lysergyl-aminoacyl)-lactams. Cyclolization of the D-lysergyl-tripeptides is performed by the Fe(2+)/2-ketoglutarate-dependent dioxygenase easH which introduces a hydroxyl group into N-(D-lysergyl-aminoacyl)-lactam at alpha-C of the aminoacyl residue followed by spontaneous condensation with the terminal lactam carbonyl group. The polypeptide is Probable inactive dehydrogenase easA (Claviceps purpurea (strain 20.1) (Ergot fungus)).